Consider the following 525-residue polypeptide: Bifunctional purine biosynthesis protein PurH (525 aa).

Residues 1–149 (MSDPVIKRAL…KNNESVTVVT (149 aa)) form the MGS-like domain.

Belongs to the PurH family.

The enzyme catalyses (6R)-10-formyltetrahydrofolate + 5-amino-1-(5-phospho-beta-D-ribosyl)imidazole-4-carboxamide = 5-formamido-1-(5-phospho-D-ribosyl)imidazole-4-carboxamide + (6S)-5,6,7,8-tetrahydrofolate. The catalysed reaction is IMP + H2O = 5-formamido-1-(5-phospho-D-ribosyl)imidazole-4-carboxamide. Its pathway is purine metabolism; IMP biosynthesis via de novo pathway; 5-formamido-1-(5-phospho-D-ribosyl)imidazole-4-carboxamide from 5-amino-1-(5-phospho-D-ribosyl)imidazole-4-carboxamide (10-formyl THF route): step 1/1. The protein operates within purine metabolism; IMP biosynthesis via de novo pathway; IMP from 5-formamido-1-(5-phospho-D-ribosyl)imidazole-4-carboxamide: step 1/1. The polypeptide is Bifunctional purine biosynthesis protein PurH (Prosthecochloris aestuarii (strain DSM 271 / SK 413)).